We begin with the raw amino-acid sequence, 74 residues long: Hadrucalcin (74 aa).

The signal sequence occupies residues 1 to 27; it reads MKTSSLTIIFIAVIITIICLNIHDIEA. Positions 28–39 are excised as a propeptide; it reads REIEFNAGRVVR. 3 disulfide bridges follow: Cys-44-Cys-58, Cys-51-Cys-62, and Cys-57-Cys-73. Residues 64–65 form an essential for stimulation of [3H]ryanodine binding to RYR1 region; that stretch reads RR.

As to expression, expressed by the venom gland.

Its subcellular location is the secreted. Its function is as follows. This toxin activates ryanodine receptors RyR1 and RyR2 by inducing a long-lasting subconductance state (35% of the full conductance stateon RyR1). Furthermore, it triggers calcium release from sarcoplasmic vesicles (11.8 nM are enough to induce a sharp release on RyR1, and 55% of the total calcium is released after toxin (100 nM) addition on RyR1) probably by acting as a cell-penetrating peptide (CPP). In addition, it has been shown to dose-dependently stimulate ryanodine binding to RyR1 (EC(50)=14.8 nM). It also augments the bell-shaped calcium-[3H]ryanodine binding curve that is maximal at about 10 uM calcium concentration. It binds a different site as ryanodine. It acts synergistically with caffeine. In vivo, intracerebroventricular injection into mice induces neurotoxic symptoms, followed by death. The polypeptide is Hadrucalcin (Hoffmannihadrurus gertschi (Scorpion)).